The primary structure comprises 760 residues: 5-methyltetrahydropteroyltriglutamate--homocysteine methyltransferase (760 aa).

5-methyltetrahydropteroyltri-L-glutamate-binding positions include 17 to 20 (RELK) and lysine 118. L-homocysteine-binding positions include 436 to 438 (IGS) and glutamate 489. Residues 436 to 438 (IGS) and glutamate 489 each bind L-methionine. Residues 520 to 521 (RC) and tryptophan 566 each bind 5-methyltetrahydropteroyltri-L-glutamate. Aspartate 604 provides a ligand contact to L-homocysteine. L-methionine is bound at residue aspartate 604. Glutamate 610 contacts 5-methyltetrahydropteroyltri-L-glutamate. Residues histidine 646, cysteine 648, and glutamate 670 each coordinate Zn(2+). The Proton donor role is filled by histidine 699. Zn(2+) is bound at residue cysteine 731.

It belongs to the vitamin-B12 independent methionine synthase family. Zn(2+) serves as cofactor.

The enzyme catalyses 5-methyltetrahydropteroyltri-L-glutamate + L-homocysteine = tetrahydropteroyltri-L-glutamate + L-methionine. Its pathway is amino-acid biosynthesis; L-methionine biosynthesis via de novo pathway; L-methionine from L-homocysteine (MetE route): step 1/1. Functionally, catalyzes the transfer of a methyl group from 5-methyltetrahydrofolate to homocysteine resulting in methionine formation. In Vibrio harveyi (Beneckea harveyi), this protein is 5-methyltetrahydropteroyltriglutamate--homocysteine methyltransferase.